The sequence spans 234 residues: Orotate phosphoribosyltransferase (234 aa).

A 5-phospho-alpha-D-ribose 1-diphosphate-binding site is contributed by Lys30. 38 to 39 serves as a coordination point for orotate; it reads FF. 5-phospho-alpha-D-ribose 1-diphosphate contacts are provided by residues 76-77, Arg103, Lys104, Lys107, His109, and 128-136; these read YK and DDVITAGTA. Residues Thr132 and Arg160 each coordinate orotate.

This sequence belongs to the purine/pyrimidine phosphoribosyltransferase family. PyrE subfamily. As to quaternary structure, homodimer. Requires Mg(2+) as cofactor.

It carries out the reaction orotidine 5'-phosphate + diphosphate = orotate + 5-phospho-alpha-D-ribose 1-diphosphate. It participates in pyrimidine metabolism; UMP biosynthesis via de novo pathway; UMP from orotate: step 1/2. In terms of biological role, catalyzes the transfer of a ribosyl phosphate group from 5-phosphoribose 1-diphosphate to orotate, leading to the formation of orotidine monophosphate (OMP). This Chromohalobacter salexigens (strain ATCC BAA-138 / DSM 3043 / CIP 106854 / NCIMB 13768 / 1H11) protein is Orotate phosphoribosyltransferase.